The sequence spans 180 residues: Large ribosomal subunit protein uL5 (180 aa).

This sequence belongs to the universal ribosomal protein uL5 family. In terms of assembly, part of the 50S ribosomal subunit; part of the 5S rRNA/L5/L18/L25 subcomplex. Contacts the 5S rRNA and the P site tRNA. Forms a bridge to the 30S subunit in the 70S ribosome.

Its function is as follows. This is one of the proteins that bind and probably mediate the attachment of the 5S RNA into the large ribosomal subunit, where it forms part of the central protuberance. In the 70S ribosome it contacts protein S13 of the 30S subunit (bridge B1b), connecting the 2 subunits; this bridge is implicated in subunit movement. Contacts the P site tRNA; the 5S rRNA and some of its associated proteins might help stabilize positioning of ribosome-bound tRNAs. This chain is Large ribosomal subunit protein uL5, found in Anaeromyxobacter sp. (strain Fw109-5).